Here is a 224-residue protein sequence, read N- to C-terminus: MADS-box transcription factor 16 (224 aa).

Positions 1 to 61 (MGRGKIEIKR…GKYHEFCSPS (61 aa)) constitute an MADS-box domain. The 91-residue stretch at 84 to 174 (YENMQRTLSH…QQELGLREEP (91 aa)) folds into the K-box domain.

In terms of assembly, may interact with the K-box of MADS4, MADS6 and MADS8. May form a heterodimer with MADS4. In terms of tissue distribution, expressed in lodicules, stamens and carpels.

It is found in the nucleus. Functionally, probable transcription factor involved in the development of floral organs. Required for normal development of lodicules and stamens (whorls 2 and 3). May function as a heterodimer with MADS4. This is MADS-box transcription factor 16 (MADS16) from Oryza sativa subsp. japonica (Rice).